A 229-amino-acid polypeptide reads, in one-letter code: Large ribosomal subunit protein uL1 (229 aa).

As to quaternary structure, part of the 50S ribosomal subunit.

Functionally, binds directly to 23S rRNA. The L1 stalk is quite mobile in the ribosome, and is involved in E site tRNA release. In terms of biological role, protein L1 is also a translational repressor protein, it controls the translation of the L11 operon by binding to its mRNA. The chain is Large ribosomal subunit protein uL1 from Rhodopseudomonas palustris (strain ATCC BAA-98 / CGA009).